Here is an 862-residue protein sequence, read N- to C-terminus: Leucine--tRNA ligase (862 aa).

The short motif at 42 to 52 is the 'HIGH' region element; that stretch reads PYPSGRLHMGH. The 'KMSKS' region motif lies at 622–626; the sequence is KMSKS. K625 provides a ligand contact to ATP.

This sequence belongs to the class-I aminoacyl-tRNA synthetase family.

The protein resides in the cytoplasm. It carries out the reaction tRNA(Leu) + L-leucine + ATP = L-leucyl-tRNA(Leu) + AMP + diphosphate. This is Leucine--tRNA ligase from Vibrio campbellii (strain ATCC BAA-1116).